A 21-amino-acid polypeptide reads, in one-letter code: Histone H2B 1 (21 aa).

A disordered region spans residues 1 to 21; that stretch reads MPDPAKTAPKKGSKKAVTKXA. An N6-acetyllysine mark is found at K6 and K11. Residues 8–21 are compositionally biased toward basic residues; sequence APKKGSKKAVTKXA. S13 carries the post-translational modification Phosphoserine. N6-acetyllysine occurs at positions 14 and 19. K19 participates in a covalent cross-link: Glycyl lysine isopeptide (Lys-Gly) (interchain with G-Cter in ubiquitin).

This sequence belongs to the histone H2B family. In terms of assembly, the nucleosome is a histone octamer containing two molecules each of H2A, H2B, H3 and H4 assembled in one H3-H4 heterotetramer and two H2A-H2B heterodimers. The octamer wraps approximately 147 bp of DNA. Post-translationally, monoubiquitination at the C-terminal Lys gives a specific tag for epigenetic transcriptional activation and is also prerequisite for histone H3 'Lys-4' and 'Lys-79' methylation. In terms of processing, phosphorylated during apoptosis; which facilitates apoptotic chromatin condensation.

The protein resides in the nucleus. It is found in the chromosome. In terms of biological role, core component of nucleosome. Nucleosomes wrap and compact DNA into chromatin, limiting DNA accessibility to the cellular machineries which require DNA as a template. Histones thereby play a central role in transcription regulation, DNA repair, DNA replication and chromosomal stability. DNA accessibility is regulated via a complex set of post-translational modifications of histones, also called histone code, and nucleosome remodeling. Has broad-spectrum antimicrobial and antibacterial activity. It is important in the antimicrobial defenses of fish skin and possesses strong activity against saprolegnia, the most common fungal infection in fish. It is also inhibitory to fish bacterial pathogens, such as aeromonas hydrophila, vibrio alginolyticus and E.coli D31. The chain is Histone H2B 1 from Ictalurus punctatus (Channel catfish).